The chain runs to 83 residues: Cytochrome b559 subunit alpha (83 aa).

A helical transmembrane segment spans residues 21-35; it reads VIHSITIPSLFIAGW. H23 lines the heme pocket.

This sequence belongs to the PsbE/PsbF family. As to quaternary structure, heterodimer of an alpha subunit and a beta subunit. PSII is composed of 1 copy each of membrane proteins PsbA, PsbB, PsbC, PsbD, PsbE, PsbF, PsbH, PsbI, PsbJ, PsbK, PsbL, PsbM, PsbT, PsbX, PsbY, PsbZ, Psb30/Ycf12, at least 3 peripheral proteins of the oxygen-evolving complex and a large number of cofactors. It forms dimeric complexes. Heme b serves as cofactor.

The protein localises to the plastid. The protein resides in the chloroplast thylakoid membrane. This b-type cytochrome is tightly associated with the reaction center of photosystem II (PSII). PSII is a light-driven water:plastoquinone oxidoreductase that uses light energy to abstract electrons from H(2)O, generating O(2) and a proton gradient subsequently used for ATP formation. It consists of a core antenna complex that captures photons, and an electron transfer chain that converts photonic excitation into a charge separation. The protein is Cytochrome b559 subunit alpha of Helianthus annuus (Common sunflower).